Consider the following 2226-residue polypeptide: MVLAGLIRKLGHQLAEIRERALKSILCKIEHNLICYADLIQERQLFLHLLEWFNFPSVPMKEEVLNLLSRLVKYPPAVQHLVDVGAVEFLSKLRSNVEPNLQAEIDGILDGLFLLPSEVPALSSASYQTNQTELSKNPEILTGYFPQDKSNFQQMEVPPRPVVNQTVKCLKFSTFPWLPLTTTDRHVLSSNESSLRSSNHTLIWNTCELLKDVIMQDFPAEIFLQRPKIVQSLLSLLKLAFGDGKHRLALQSVSCLQQLCMYLRNRLNFHRDPGFFSNKHDTVSQNSSLSYCHEARGTHHSQNPSPGSSSPRPSVVGRTGQRPRGDGQDWDAASSSGSSSHAHVNSRISVHSPLDMGHIDLPELETEDTLELQFQQLSLPQFCVSILESAVPLLRTGSRQVIIRVLELLTEDMTLIGEAISTDIWDDSSLFGIDMKEKLLLVLGALGETMCYHKSSISLEQPEVMLVHHRMAFISISLFAVRLLQTLLPVEKASEFLSEPMSTALFLLSLDMPISLEYPNIHEAVVAYLEQLNSENYSIYKRTAEAVYSIECTCNFLSDIGKEGEKNLLELVELADQALRSFSYHQHFPLIKEIISICSKIWKSAQASPLLQGESQKVLLHMLSHPLPRVKAETYHCCLEITKECLGVHNVTKPVSSLCNGIHFLLHPKVLYEISVFGIQEPESEVNTAAKAILLYLLQGRLMMTALTWNKFIESLCPVIPILQGYADTEDPLGNCILLLSKASSDTEEMLPCTTRLKSMLRLLLVKKPSVRSLALKLLAFHLTSEEGADTKRPLIDARVLSRVTDLFIGKKPIELRLDDRRELVIKLETVEKVYEIFTSDDVDLVLRKSAAEQLAVIMQDIKMHAVVKKLCLIDKIIEYLNECVSQDGKVVECLVQPCLTLLRKVLCGDPVMRVSLSQQSSLLTVLFRVSLIFHEDCSVVTEVGALFCLLLFDEVSRMDMWSVNPSNKPSLPSVFSLPVSVFRRYHLPVHVIGHHAVSPYSIVLPLSADCLALKPVSDMLRIAWNLSWYHGSDNLLKQMNSETKTQEILDALKLSTEDILTLKITHMASGLQDCLHSIVQAATHREVRAAVTRMSFYLLNDRLSLKGCPGPCGVTLKSLAWHTALNRFLQVLPACTEDEKLLIDIIHFLNKLIKEQRKNSSLELLNWILELLLRHSANPLLDLLVLTESQAREETDDIRTAVRQQLQKELIALFDTLLLNFMEVTDRKCSELLYVFQTQLALKLLQCLKVTDAPHFYGLPSLERTLRGMANLTAFPGWSSHSPLTKPLDICVKYLSGLLEVITSFYVERGGNAMSFMGKGVTKSTILCLLHLSHEMMAQAGSLEWMSLWFLPLGSHSEEHIPTQQGLAWLIPLWVDRDPEVRFTSLGLGSALTTLETGCVALANSCQNISGGLWGTVVNILLDQSECSMVRREAAFILQNLLVIPMPTEIIKDYTWQGPCVHDEDSGLSLIGKPALQALLYHCHFYEHLNQMVKHCYLGRCMFDLNFSAFDRNSESNDLNGLDDSFKFWRAPSRTSQDRDPSSLSTSETTVAPSLGSTEFQPLVQSTTLLPEASHDQFVAQGHQESTSPRPPHDSSLSAPLPKLCVFVTPSLLSAMCSLLDNLLTIAPRDTAKAFRQAHLIELLCSIADATLIQTCVQELRALLPSSPPAEHTQAQVSFLLEYLSSLSRLLQSCLLVEPDLVIQDELVKPLITNIIGILTICTKDVLDKELISAFYHTWTHLFNLLAMLLRKAGAITLPFVTVALAKHWTAAIDMFCTCAGLSATCPALYTASLQFLSVLLTEEAKGHLQAKSKTHLCCSPTVASLLDDSQENQKSLEQLSDVILQCYEGKSSKDILKRVAANALMSLLAVSRRAQKHALKANLIDNCMEQMKHINAQLNLDSLRPGKAALKKKEDGVIKELSIAMQLLRNCLYQNEECKEAALEAHLVPVLHSLWPWILMDDSLMQISLQLLCVYTANFPNGCSSLCWSSCGQHPVQATHRGAVSNSLMLCILKLASQMPLENTTVQQMVFMLLSNLALSHDCKGVIQKSNFLQNFLSLALPKGGNKHLSNLTILWLKLLLNISSGEDGQQMILRLDGCLDLLTEMSKYKHKSSPLLPLLIFHNVCFSPANKPKILANEKVITVLAACLESENQNAQRIGAAALWALIYNYQKAKTALKSPSVKRRVDEAYSLAKKTFPNSEANPLNAYYLKCLENLVQLLNSS.

The tract at residues 295–345 is disordered; that stretch reads ARGTHHSQNPSPGSSSPRPSVVGRTGQRPRGDGQDWDAASSSGSSSHAHVN. Low complexity-rich tracts occupy residues 304-318 and 332-343; these read PSPG…VVGR and AASSSGSSSHAH. Position 310 is a phosphoserine (Ser-310). Lys-811 is subject to N6-acetyllysine. Positions 1534-1554 are disordered; it reads SRTSQDRDPSSLSTSETTVAP. Over residues 1543-1554 the composition is skewed to polar residues; that stretch reads SSLSTSETTVAP.

It belongs to the rotatin family. In terms of assembly, interacts with PPP1R35; this interaction allows the mutual recruitment to the centriole.

The protein resides in the cytoplasm. The protein localises to the cytoskeleton. It localises to the cilium basal body. It is found in the microtubule organizing center. Its subcellular location is the centrosome. Its function is as follows. Involved in the genetic cascade that governs left-right specification. Plays a role in the maintenance of a normal ciliary structure. Required for correct asymmetric expression of NODAL, LEFTY and PITX2. The protein is Rotatin of Homo sapiens (Human).